A 218-amino-acid chain; its full sequence is N-(5'-phosphoribosyl)anthranilate isomerase (218 aa).

The protein belongs to the TrpF family.

The catalysed reaction is N-(5-phospho-beta-D-ribosyl)anthranilate = 1-(2-carboxyphenylamino)-1-deoxy-D-ribulose 5-phosphate. It participates in amino-acid biosynthesis; L-tryptophan biosynthesis; L-tryptophan from chorismate: step 3/5. The polypeptide is N-(5'-phosphoribosyl)anthranilate isomerase (Rhodopseudomonas palustris (strain BisB5)).